The chain runs to 221 residues: 7-cyano-7-deazaguanine synthase (221 aa).

9–19 (YSGGMDSFTVL) contributes to the ATP binding site. Residues Cys186, Cys194, Cys197, and Cys200 each contribute to the Zn(2+) site.

Belongs to the QueC family. Requires Zn(2+) as cofactor.

It carries out the reaction 7-carboxy-7-deazaguanine + NH4(+) + ATP = 7-cyano-7-deazaguanine + ADP + phosphate + H2O + H(+). The protein operates within purine metabolism; 7-cyano-7-deazaguanine biosynthesis. In terms of biological role, catalyzes the ATP-dependent conversion of 7-carboxy-7-deazaguanine (CDG) to 7-cyano-7-deazaguanine (preQ(0)). This Psychromonas ingrahamii (strain DSM 17664 / CCUG 51855 / 37) protein is 7-cyano-7-deazaguanine synthase.